We begin with the raw amino-acid sequence, 442 residues long: Testican-1 (442 aa).

The N-terminal stretch at 1 to 21 (MPAIAVLAAAAAAWCFLQVDS) is a signal peptide. Disulfide bonds link Cys-89–Cys-100, Cys-94–Cys-110, Cys-139–Cys-169, Cys-142–Cys-162, Cys-151–Cys-183, Cys-316–Cys-340, Cys-351–Cys-358, and Cys-360–Cys-379. The Kazal-like domain maps to 133–185 (PSNLVKCKPCPVAQSAMVCGSDGHTYTSKCKLEFHACSTGKSLNSLCDGPCPC). In terms of domain architecture, Thyroglobulin type-1 spans 313 to 379 (GLPCQNEMNR…GSRKQGTVSC (67 aa)). Disordered stretches follow at residues 375–395 (GTVSCEEEQETSGDFGSGGSV) and 420–442 (TRAVREDDEDEDDDKEDEVGYIW). Residues Ser-386 and Ser-391 are each glycosylated (O-linked (Xyl...) (glycosaminoglycan) serine). Over residues 425–442 (EDDEDEDDDKEDEVGYIW) the composition is skewed to acidic residues.

Post-translationally, contains chondroitin sulfate and heparan sulfate O-linked oligosaccharides. As to expression, predominantly expressed in the postsynaptic area of pyramidal neurons.

The protein localises to the secreted. The protein resides in the extracellular space. It is found in the extracellular matrix. Its function is as follows. May play a role in cell-cell and cell-matrix interactions. May contribute to various neuronal mechanisms in the central nervous system. The polypeptide is Testican-1 (Spock1) (Mus musculus (Mouse)).